The sequence spans 93 residues: Large ribosomal subunit protein bL27 (93 aa).

The propeptide occupies 1-8; it reads MIMDLQFF. The tract at residues 8–29 is disordered; that stretch reads FSHHKGGGSTANGRNSAGRRLG.

It belongs to the bacterial ribosomal protein bL27 family. Post-translationally, the N-terminus is cleaved by ribosomal processing cysteine protease Prp.

The chain is Large ribosomal subunit protein bL27 from Limosilactobacillus reuteri (strain DSM 20016) (Lactobacillus reuteri).